The chain runs to 221 residues: Enolase-phosphatase E1 (221 aa).

Mg(2+) contacts are provided by Asp9 and Glu11. Substrate-binding positions include 116–117 and Lys152; that span reads SS. Asp180 contacts Mg(2+).

It belongs to the HAD-like hydrolase superfamily. MasA/MtnC family. Monomer. The cofactor is Mg(2+).

Its subcellular location is the cytoplasm. The protein localises to the nucleus. The catalysed reaction is 5-methylsulfanyl-2,3-dioxopentyl phosphate + H2O = 1,2-dihydroxy-5-(methylsulfanyl)pent-1-en-3-one + phosphate. The protein operates within amino-acid biosynthesis; L-methionine biosynthesis via salvage pathway; L-methionine from S-methyl-5-thio-alpha-D-ribose 1-phosphate: step 3/6. It functions in the pathway amino-acid biosynthesis; L-methionine biosynthesis via salvage pathway; L-methionine from S-methyl-5-thio-alpha-D-ribose 1-phosphate: step 4/6. Its function is as follows. Bifunctional enzyme that catalyzes the enolization of 2,3-diketo-5-methylthiopentyl-1-phosphate (DK-MTP-1-P) into the intermediate 2-hydroxy-3-keto-5-methylthiopentenyl-1-phosphate (HK-MTPenyl-1-P), which is then dephosphorylated to form the acireductone 1,2-dihydroxy-3-keto-5-methylthiopentene (DHK-MTPene). In Kluyveromyces lactis (strain ATCC 8585 / CBS 2359 / DSM 70799 / NBRC 1267 / NRRL Y-1140 / WM37) (Yeast), this protein is Enolase-phosphatase E1.